A 350-amino-acid polypeptide reads, in one-letter code: Adenine deaminase (350 aa).

The Zn(2+) site is built by His-24, His-26, and His-207. The active-site Proton donor is the Glu-210. Asp-288 contributes to the Zn(2+) binding site. Asp-289 is a binding site for substrate.

This sequence belongs to the metallo-dependent hydrolases superfamily. Adenosine and AMP deaminases family. Adenine deaminase type 2 subfamily. The cofactor is Zn(2+).

The enzyme catalyses adenine + H2O + H(+) = hypoxanthine + NH4(+). Catalyzes the hydrolytic deamination of adenine to hypoxanthine. Plays an important role in the purine salvage pathway and in nitrogen catabolism. The polypeptide is Adenine deaminase (Paraburkholderia xenovorans (strain LB400)).